Consider the following 448-residue polypeptide: MNSAYHPPDMSQRIPGPAYSSSAPPPIHTYQQHQHPPPPLPPPSQHHHSSHPPLPPPPSAPHPHHQHPPPPPSHSLSSHQHHGQPPHHQPQPYAPAPYQQSQPSQYPRPHPHQQHVPPPSQHDEPPPPPSSGPSPTDHQKDSEYVPPSYSKIEEGSGWKYSLDVKQQPVRARMCGFGDKDRRPITPPPCVRLVIINTETGKEVDYNTLDHAMFVLSVDLWNHDEPGTPSYQQQSLPPSRESGYGQSQGMNYGQDYPPPVQQSYGPAPSYPPSSSYGPPQQYYPRHSGYSAEPSAPPPGAPFRNGYGQDQNALTRMAVVGGQPQGMFTRNLIGSLAASAFRLEDTEGQSGIWFVLQDLSVRTEGTFRLRFSFVNVGRPGGQGTNVNQGRAPILSSCYSESFHVYSAKKFPGVCESTPLSKKFANQGIKIPIRKDANIKGEGDEEMYDQN.

Disordered regions lie at residues 1 to 153 (MNSA…SKIE) and 224 to 306 (EPGT…NGYG). Low complexity predominate over residues 15–34 (PGPAYSSSAPPPIHTYQQHQ). 2 stretches are compositionally biased toward pro residues: residues 35–44 (HPPPPLPPPS) and 52–61 (PPLPPPPSAP). Positions 96–107 (APYQQSQPSQYP) are enriched in low complexity. The segment covering 116-132 (VPPPSQHDEPPPPPSSG) has biased composition (pro residues). The 277-residue stretch at 155 to 431 (GSGWKYSLDV…ANQGIKIPIR (277 aa)) folds into the Velvet domain. The span at 260 to 292 (QQSYGPAPSYPPSSSYGPPQQYYPRHSGYSAEP) shows a compositional bias: low complexity.

This sequence belongs to the velvet family. VelB subfamily. Component of the heterotrimeric velvet complex composed of LAE1, VE1 and VELB; VE1 acting as a bridging protein between LAE1 and VEL2. Interacts with VE1. Forms a heterodimeric complex with VOS1; the formation of the VELB-VOS1 complex is light-dependent.

The protein localises to the nucleus. The protein resides in the cytoplasm. Component of the velvet transcription factor complex that controls sexual/asexual developmental ratio in response to light, promoting sexual development in the darkness while stimulating asexual sporulation under illumination. The velvet complex acts as a global regulator for secondary metabolite gene expression. Component of the VELB-VOS1 heterodimeric complex that plays a dual role in activating genes associated with spore maturation and repressing certain development-associated genes. The VELB-VOS1 complex binds DNA through the DNA-binding domain of VOS1 that recognizes an 11-nucleotide consensus sequence 5'-CTGGCCGCGGC-3' consisting of two motifs in the promoters of key developmental regulatory genes. Controls the expression of the fumonisins gene cluster. Involved in cell wall integrity, cell surface hydrophobicity, hyphal polarity and conidiation pattern. Involved in oxidative stress resistance by positively regulating the transcription of the catalase-encoding gene CAT2. The sequence is that of Velvet complex subunit 2 from Gibberella moniliformis (strain M3125 / FGSC 7600) (Maize ear and stalk rot fungus).